Consider the following 356-residue polypeptide: 3-dehydroquinate synthase (356 aa).

NAD(+) is bound by residues 69-74, 103-107, 127-128, Lys-140, Lys-149, and 167-170; these read DGEKFK, GVIGD, TT, and CLKT. Zn(2+)-binding residues include Glu-182, His-245, and His-262.

The protein belongs to the sugar phosphate cyclases superfamily. Dehydroquinate synthase family. The cofactor is Co(2+). Zn(2+) serves as cofactor. It depends on NAD(+) as a cofactor.

The protein resides in the cytoplasm. The catalysed reaction is 7-phospho-2-dehydro-3-deoxy-D-arabino-heptonate = 3-dehydroquinate + phosphate. Its pathway is metabolic intermediate biosynthesis; chorismate biosynthesis; chorismate from D-erythrose 4-phosphate and phosphoenolpyruvate: step 2/7. Catalyzes the conversion of 3-deoxy-D-arabino-heptulosonate 7-phosphate (DAHP) to dehydroquinate (DHQ). The sequence is that of 3-dehydroquinate synthase from Psychromonas ingrahamii (strain DSM 17664 / CCUG 51855 / 37).